Here is a 211-residue protein sequence, read N- to C-terminus: Arginine exporter protein ArgO (211 aa).

6 consecutive transmembrane segments (helical) span residues 1-21 (MISYYFQGFALGAAMILPLGP), 37-57 (LMIALLCALSDLVLISAGIFG), 68-88 (LLALVTWGGVAFLLWYGLGAL), 111-131 (IIATMLAVTWLNPHVYLDTFV), 147-167 (WFALGTISASFLWFFGLALLA), and 179-199 (AQRIINILVGVVMWLIAFQLA).

The protein belongs to the LysE/ArgO transporter (TC 2.A.75) family.

It is found in the cell inner membrane. It catalyses the reaction L-arginine(in) = L-arginine(out). In terms of biological role, involved in the export of arginine. Important to control the intracellular level of arginine and the correct balance between arginine and lysine. This chain is Arginine exporter protein ArgO, found in Salmonella enteritidis PT4 (strain P125109).